The primary structure comprises 210 residues: Large ribosomal subunit protein uL4 (210 aa).

Positions 49–76 (HCTKTRSEVSGGGKKPWRQKHTGRARHG) are disordered. The segment covering 63-76 (KPWRQKHTGRARHG) has biased composition (basic residues).

Belongs to the universal ribosomal protein uL4 family. In terms of assembly, part of the 50S ribosomal subunit.

Functionally, one of the primary rRNA binding proteins, this protein initially binds near the 5'-end of the 23S rRNA. It is important during the early stages of 50S assembly. It makes multiple contacts with different domains of the 23S rRNA in the assembled 50S subunit and ribosome. In terms of biological role, forms part of the polypeptide exit tunnel. The chain is Large ribosomal subunit protein uL4 from Thermodesulfovibrio yellowstonii (strain ATCC 51303 / DSM 11347 / YP87).